The primary structure comprises 109 residues: Spermidine export protein MdtI (109 aa).

4 helical membrane-spanning segments follow: residues W6–L26, C36–V56, A64–F84, and L88–F108.

This sequence belongs to the drug/metabolite transporter (DMT) superfamily. Small multidrug resistance (SMR) (TC 2.A.7.1) family. MdtI subfamily. Forms a complex with MdtJ.

Its subcellular location is the cell inner membrane. Functionally, catalyzes the excretion of spermidine. This Salmonella paratyphi A (strain ATCC 9150 / SARB42) protein is Spermidine export protein MdtI.